A 107-amino-acid chain; its full sequence is Hydrogenase expression/formation protein HoxL (107 aa).

Belongs to the HupF/HypC family.

The sequence is that of Hydrogenase expression/formation protein HoxL (hoxL) from Cupriavidus necator (strain ATCC 17699 / DSM 428 / KCTC 22496 / NCIMB 10442 / H16 / Stanier 337) (Ralstonia eutropha).